The primary structure comprises 199 residues: 7-methyl-GTP pyrophosphatase (199 aa).

Catalysis depends on Asp73, which acts as the Proton acceptor.

The protein belongs to the Maf family. YceF subfamily. The cofactor is a divalent metal cation.

The protein localises to the cytoplasm. The enzyme catalyses N(7)-methyl-GTP + H2O = N(7)-methyl-GMP + diphosphate + H(+). Functionally, nucleoside triphosphate pyrophosphatase that hydrolyzes 7-methyl-GTP (m(7)GTP). May have a dual role in cell division arrest and in preventing the incorporation of modified nucleotides into cellular nucleic acids. The protein is 7-methyl-GTP pyrophosphatase of Bordetella pertussis (strain Tohama I / ATCC BAA-589 / NCTC 13251).